The sequence spans 1097 residues: DNA-directed RNA polymerase subunit beta (1097 aa).

The segment at 1071 to 1097 (MQDVNPKRNTPSRPTYESLGTSEYAED) is disordered. A compositionally biased stretch (polar residues) spans 1077–1091 (KRNTPSRPTYESLGT).

The protein belongs to the RNA polymerase beta chain family. As to quaternary structure, in cyanobacteria the RNAP catalytic core is composed of 2 alpha, 1 beta, 1 beta', 1 gamma and 1 omega subunit. When a sigma factor is associated with the core the holoenzyme is formed, which can initiate transcription.

The catalysed reaction is RNA(n) + a ribonucleoside 5'-triphosphate = RNA(n+1) + diphosphate. DNA-dependent RNA polymerase catalyzes the transcription of DNA into RNA using the four ribonucleoside triphosphates as substrates. The sequence is that of DNA-directed RNA polymerase subunit beta from Prochlorococcus marinus subsp. pastoris (strain CCMP1986 / NIES-2087 / MED4).